Here is a 270-residue protein sequence, read N- to C-terminus: 4-hydroxy-tetrahydrodipicolinate reductase (270 aa).

NAD(+)-binding positions include 9 to 14 (GAGGRM) and Glu35. Arg36 contacts NADP(+). Residues 99 to 101 (GTT) and 123 to 126 (ASNY) each bind NAD(+). The active-site Proton donor/acceptor is His156. His157 contributes to the (S)-2,3,4,5-tetrahydrodipicolinate binding site. The active-site Proton donor is Lys160. 166-167 (GT) provides a ligand contact to (S)-2,3,4,5-tetrahydrodipicolinate.

Belongs to the DapB family.

The protein resides in the cytoplasm. It carries out the reaction (S)-2,3,4,5-tetrahydrodipicolinate + NAD(+) + H2O = (2S,4S)-4-hydroxy-2,3,4,5-tetrahydrodipicolinate + NADH + H(+). The enzyme catalyses (S)-2,3,4,5-tetrahydrodipicolinate + NADP(+) + H2O = (2S,4S)-4-hydroxy-2,3,4,5-tetrahydrodipicolinate + NADPH + H(+). It participates in amino-acid biosynthesis; L-lysine biosynthesis via DAP pathway; (S)-tetrahydrodipicolinate from L-aspartate: step 4/4. Catalyzes the conversion of 4-hydroxy-tetrahydrodipicolinate (HTPA) to tetrahydrodipicolinate. The chain is 4-hydroxy-tetrahydrodipicolinate reductase from Actinobacillus succinogenes (strain ATCC 55618 / DSM 22257 / CCUG 43843 / 130Z).